A 169-amino-acid polypeptide reads, in one-letter code: Sec-independent protein translocase protein TatB (169 aa).

The helical transmembrane segment at 2–22 (SPGIGMPELLVVLVLALVVVG) threads the bilayer. The interval 106 to 169 (NQAETDADKA…AKPVDEIKGR (64 aa)) is disordered.

The protein belongs to the TatB family. As to quaternary structure, the Tat system comprises two distinct complexes: a TatABC complex, containing multiple copies of TatA, TatB and TatC subunits, and a separate TatA complex, containing only TatA subunits. Substrates initially bind to the TatABC complex, which probably triggers association of the separate TatA complex to form the active translocon.

The protein resides in the cell inner membrane. Its function is as follows. Part of the twin-arginine translocation (Tat) system that transports large folded proteins containing a characteristic twin-arginine motif in their signal peptide across membranes. Together with TatC, TatB is part of a receptor directly interacting with Tat signal peptides. TatB may form an oligomeric binding site that transiently accommodates folded Tat precursor proteins before their translocation. The protein is Sec-independent protein translocase protein TatB of Maricaulis maris (strain MCS10) (Caulobacter maris).